Reading from the N-terminus, the 154-residue chain is D-aminoacyl-tRNA deacylase (154 aa).

Residues 142-143 (GP) carry the Gly-cisPro motif, important for rejection of L-amino acids motif.

Belongs to the DTD family. As to quaternary structure, homodimer.

The protein localises to the cytoplasm. It catalyses the reaction glycyl-tRNA(Ala) + H2O = tRNA(Ala) + glycine + H(+). It carries out the reaction a D-aminoacyl-tRNA + H2O = a tRNA + a D-alpha-amino acid + H(+). An aminoacyl-tRNA editing enzyme that deacylates mischarged D-aminoacyl-tRNAs. Also deacylates mischarged glycyl-tRNA(Ala), protecting cells against glycine mischarging by AlaRS. Acts via tRNA-based rather than protein-based catalysis; rejects L-amino acids rather than detecting D-amino acids in the active site. By recycling D-aminoacyl-tRNA to D-amino acids and free tRNA molecules, this enzyme counteracts the toxicity associated with the formation of D-aminoacyl-tRNA entities in vivo and helps enforce protein L-homochirality. In Yarrowia lipolytica (strain CLIB 122 / E 150) (Yeast), this protein is D-aminoacyl-tRNA deacylase (DTD1).